We begin with the raw amino-acid sequence, 299 residues long: Taste receptor type 2 member 4 (299 aa).

Residues 1–9 (MLRLFYFSA) lie on the Extracellular side of the membrane. A helical membrane pass occupies residues 10-30 (IIASVILNFVGIIMNLFITVV). Over 31 to 46 (NCKTWVKSHRISSSDR) the chain is Cytoplasmic. A helical transmembrane segment spans residues 47–67 (ILFSLGITRFLMLGLFLVNTI). Residues 68 to 81 (YFVSSNXERSVYLS) are Extracellular-facing. A helical membrane pass occupies residues 82 to 102 (AFFVLCFMFLDSSSLWFVTLL). The Cytoplasmic portion of the chain corresponds to 103–131 (NILYCVKITNFQHSVFLLLKRNISPKIPR). A helical membrane pass occupies residues 132–152 (LLLACVLISAFTTCLYITLSQ). Topologically, residues 153-172 (ASPFPELVTTRNNTSFNINE) are extracellular. N-linked (GlcNAc...) asparagine glycans are attached at residues asparagine 164 and asparagine 165. Residues 173-193 (GILSLVVSLVLSSSLQFIINV) traverse the membrane as a helical segment. The Cytoplasmic portion of the chain corresponds to 194 to 230 (TSASLLIHSLRRHIQKMQKNATGFWNPQTEAHVGAMK). A helical transmembrane segment spans residues 231–251 (LMVYFLILYIPYSVATLVQYL). Over 252 to 262 (PFYAGMDMGTK) the chain is Extracellular. Residues 263–283 (SICLIFATLYSPGHSVLIIIT) form a helical membrane-spanning segment. The Cytoplasmic portion of the chain corresponds to 284–299 (HPKLKTTAKKILCFKK).

The protein belongs to the G-protein coupled receptor T2R family.

It is found in the membrane. The protein resides in the cell projection. The protein localises to the cilium membrane. In terms of biological role, gustducin-coupled receptor implicated in the perception of bitter compounds in the oral cavity and the gastrointestinal tract. Signals through PLCB2 and the calcium-regulated cation channel TRPM5. In airway epithelial cells, binding of denatonium increases the intracellular calcium ion concentration and stimulates ciliary beat frequency. The chain is Taste receptor type 2 member 4 (TAS2R4) from Pan troglodytes (Chimpanzee).